We begin with the raw amino-acid sequence, 772 residues long: Phosphatidylinositol 4-phosphate 5-kinase 5 (772 aa).

Residues 22–56 (AKKRANSVFGTVSVAPHTDNDTTTDDNDDETTTNR) are disordered. Residues 43–52 (TTTDDNDDET) are compositionally biased toward acidic residues. MORN repeat units lie at residues 75–97 (YTGQ…DGCM), 98–120 (YIGD…SGAT), 121–143 (YEGE…SGDA), 144–166 (YKGQ…NGDA), 167–189 (YDGE…DGSY), 190–212 (YIGE…NGNR), 213–235 (YDGF…NGSF), and 236–257 (YVGH…SGNE). The 392-residue stretch at 377–768 (SKGHRNYELM…RFRDFIFKVF (392 aa)) folds into the PIPK domain. The disordered stretch occupies residues 646–665 (SGARTPIGESEEESGPRLSR). The activation loop stretch occupies residues 728–749 (YDISKKLEHAYKSIQYDPSSIS).

The catalysed reaction is a 1,2-diacyl-sn-glycero-3-phospho-(1D-myo-inositol 4-phosphate) + ATP = a 1,2-diacyl-sn-glycero-3-phospho-(1D-myo-inositol-4,5-bisphosphate) + ADP + H(+). This chain is Phosphatidylinositol 4-phosphate 5-kinase 5 (PIP5K5), found in Arabidopsis thaliana (Mouse-ear cress).